A 206-amino-acid chain; its full sequence is Large ribosomal subunit protein uL4 (206 aa).

The disordered stretch occupies residues 47–75 (GTQSAKTRAEVSGGGIKPWRQKGTGRARQ).

Belongs to the universal ribosomal protein uL4 family. In terms of assembly, part of the 50S ribosomal subunit.

Its function is as follows. One of the primary rRNA binding proteins, this protein initially binds near the 5'-end of the 23S rRNA. It is important during the early stages of 50S assembly. It makes multiple contacts with different domains of the 23S rRNA in the assembled 50S subunit and ribosome. In terms of biological role, forms part of the polypeptide exit tunnel. The polypeptide is Large ribosomal subunit protein uL4 (Clostridium botulinum (strain 657 / Type Ba4)).